A 137-amino-acid polypeptide reads, in one-letter code: uncharacterized protein (137 aa).

The disordered stretch occupies residues 1–32 (MRDHLPPGLPPDPFADDPCDPSAALDAVEPGQ).

The protein to M.tuberculosis Rv3412.

This is an uncharacterized protein from Mycobacterium leprae (strain TN).